Here is a 305-residue protein sequence, read N- to C-terminus: Homoserine O-acetyltransferase (305 aa).

The active-site Acyl-thioester intermediate is the Cys-142. Residues Lys-163 and Ser-192 each contribute to the substrate site. His-235 (proton acceptor) is an active-site residue. Residue Glu-237 is part of the active site. Residue Arg-249 coordinates substrate.

The protein belongs to the MetA family.

Its subcellular location is the cytoplasm. The enzyme catalyses L-homoserine + acetyl-CoA = O-acetyl-L-homoserine + CoA. It participates in amino-acid biosynthesis; L-methionine biosynthesis via de novo pathway; O-acetyl-L-homoserine from L-homoserine: step 1/1. Its function is as follows. Transfers an acetyl group from acetyl-CoA to L-homoserine, forming acetyl-L-homoserine. This is Homoserine O-acetyltransferase from Bacteroides fragilis (strain YCH46).